The primary structure comprises 243 residues: NAD-dependent protein deacetylase (243 aa).

The Deacetylase sirtuin-type domain maps to 1–243 (MKHDLETLKH…VSVVKSLMTE (243 aa)). NAD(+) contacts are provided by Ala-24, Phe-35, Arg-36, Gln-105, Ile-107, Asp-108, and His-123. Phe-35 serves as a coordination point for nicotinamide. 2 residues coordinate nicotinamide: Ile-107 and Asp-108. The Proton acceptor role is filled by His-123. Zn(2+) contacts are provided by Cys-131, Cys-134, Cys-151, and Cys-154. Positions 192, 193, 215, and 232 each coordinate NAD(+).

It belongs to the sirtuin family. Class U subfamily. Zn(2+) serves as cofactor.

It localises to the cytoplasm. It catalyses the reaction N(6)-acetyl-L-lysyl-[protein] + NAD(+) + H2O = 2''-O-acetyl-ADP-D-ribose + nicotinamide + L-lysyl-[protein]. NAD-dependent protein deacetylase which modulates the activities of several enzymes which are inactive in their acetylated form. This chain is NAD-dependent protein deacetylase, found in Staphylococcus aureus (strain COL).